The chain runs to 1928 residues: Myosin-1 (1928 aa).

One can recognise a Myosin N-terminal SH3-like domain in the interval S8–P71. The 717-residue stretch at D75–D791 folds into the Myosin motor domain. An ATP-binding site is contributed by G180–T187. Positions I460–S529 are actin-binding. Positions S629–Q641 are enriched in polar residues. Residues S629–S657 form a disordered region. The IQ domain occupies L794 to K823. Residues S856–M1911 are a coiled coil.

Belongs to the TRAFAC class myosin-kinesin ATPase superfamily. Myosin family.

Functionally, required for cell division. This chain is Myosin-1 (MYO1), found in Saccharomyces cerevisiae (strain ATCC 204508 / S288c) (Baker's yeast).